The sequence spans 237 residues: Phosphoserine phosphatase (237 aa).

D30 functions as the Nucleophile in the catalytic mechanism. Residues D30 and D32 each contribute to the Mg(2+) site. D32 functions as the Proton donor in the catalytic mechanism. Substrate-binding positions include E39, R76, 120-121 (SG), and K169. D192 lines the Mg(2+) pocket. N195 is a binding site for substrate.

This sequence belongs to the HAD-like hydrolase superfamily. SerB family. Mg(2+) is required as a cofactor.

It carries out the reaction O-phospho-L-serine + H2O = L-serine + phosphate. It catalyses the reaction O-phospho-D-serine + H2O = D-serine + phosphate. The protein operates within amino-acid biosynthesis; L-serine biosynthesis; L-serine from 3-phospho-D-glycerate: step 3/3. Its function is as follows. Catalyzes the dephosphorylation of phosphoserine (P-Ser) in vitro. Also catalyzes the dephosphorylation of phosphothreonine (P-Thr) in vitro. The sequence is that of Phosphoserine phosphatase from Albidiferax ferrireducens (strain ATCC BAA-621 / DSM 15236 / T118) (Rhodoferax ferrireducens).